A 492-amino-acid chain; its full sequence is MNDFTMNDLMGLLPYAPIIAVVITVLVVMIAITMKRSHMVTGTISVVGLNIGLFILLGQMAGIIDSGSLVPAAEQLFVIDNFAQFNMVIIFICALACCTLSYAYLADLKDHKEELYLLMLLSTVGALLMVCAQHLASFFMSLEMLSIPLYGMLSYTYMRTRSLESGLKYLVLSATASATLLMGMAFIYAEVGSLAFKPISLTLADTFESPLLILGAAMMMFGIAFKLSAAPFHIWTPDVYEGAPAPIATYLASVSKVAMMALAVRFLIDTSLLALPSVQMLLMVMATLSILLGNLLAVRQTSLKRLLGYSSIAHMGYVLIVIVSIGSAADSISSMYMAIYAFTSIGAFGVVTLMSSPYRLSGEADELTHYQGLFWRRPVLTAVMTIMMLSLAGIPLTAGFITKLFAILAAVQGTNWFLAAMIILGSAIGLFYYLRVLLTLFKRPKQFIEFDVSKQWGLRTGGIMVIAVTAIIVFFGVLPNSMIEWASLARIW.

14 helical membrane passes run 12–32 (LLPY…MIAI), 44–64 (ISVV…AGII), 76–96 (LFVI…CALA), 115–135 (LYLL…AQHL), 138–158 (FFMS…YTYM), 169–189 (YLVL…FIYA), 212–232 (LILG…AAPF), 244–264 (PAPI…ALAV), 272–292 (LLAL…SILL), 306–326 (LLGY…VSIG), 334–354 (SMYM…VTLM), 381–401 (TAVM…AGFI), 416–438 (WFLA…RVLL), and 463–483 (IMVI…NSMI).

The protein belongs to the complex I subunit 2 family. In terms of assembly, NDH-1 is composed of 14 different subunits. Subunits NuoA, H, J, K, L, M, N constitute the membrane sector of the complex.

The protein localises to the cell inner membrane. The catalysed reaction is a quinone + NADH + 5 H(+)(in) = a quinol + NAD(+) + 4 H(+)(out). Its function is as follows. NDH-1 shuttles electrons from NADH, via FMN and iron-sulfur (Fe-S) centers, to quinones in the respiratory chain. The immediate electron acceptor for the enzyme in this species is believed to be ubiquinone. Couples the redox reaction to proton translocation (for every two electrons transferred, four hydrogen ions are translocated across the cytoplasmic membrane), and thus conserves the redox energy in a proton gradient. The polypeptide is NADH-quinone oxidoreductase subunit N (Psychrobacter arcticus (strain DSM 17307 / VKM B-2377 / 273-4)).